Reading from the N-terminus, the 1011-residue chain is Cell division cycle-associated protein 2 (1011 aa).

The segment covering 1–22 has biased composition (polar residues); sequence MDTCSQESEPLQTKESPINNAG. The interval 1-26 is disordered; it reads MDTCSQESEPLQTKESPINNAGKTPL. Serine 125, serine 130, serine 209, serine 293, and serine 310 each carry phosphoserine. Threonine 313 is modified (phosphothreonine). Residues 380–440 form the PP1-binding domain; that stretch reads KRKRVTFGED…PEWLPQPNFD (61 aa). Phosphoserine occurs at positions 391 and 398. Disordered stretches follow at residues 395 to 438 and 522 to 544; these read LDES…PQPN and PCKE…KVLP. Threonine 403 bears the Phosphothreonine mark. A compositionally biased stretch (low complexity) spans 418–431; it reads SSLSPPLLEQSPVP. Phosphoserine is present on serine 428. Residues 522 to 543 are compositionally biased toward basic and acidic residues; that stretch reads PCKEKKTNRRKSQESKHADKVL. Phosphoserine is present on residues serine 583, serine 702, and serine 747. Residue lysine 753 forms a Glycyl lysine isopeptide (Lys-Gly) (interchain with G-Cter in SUMO2) linkage. The segment covering 790 to 803 has biased composition (basic and acidic residues); the sequence is DQRKVSKSQGEDLG. 2 disordered regions span residues 790–835 and 896–1011; these read DQRK…GLHL and GLVW…LSEN. Residues 931–945 are compositionally biased toward polar residues; it reads SSRQDPCTLPSTSSE. Phosphoserine is present on serine 967. The segment covering 968 to 983 has biased composition (polar residues); the sequence is FCTSTLANPKSTTQSR. A compositionally biased stretch (basic and acidic residues) spans 993–1011; the sequence is QKRENTLQETSRESDLSEN.

In terms of assembly, interacts with PPP1CC. Phosphorylated by CDK1. May regulate its subcellular location.

The protein localises to the nucleus. Functionally, regulator of chromosome structure during mitosis required for condensin-depleted chromosomes to retain their compact architecture through anaphase. Acts by mediating the recruitment of phopsphatase PP1-gamma subunit (PPP1CC) to chromatin at anaphase and into the following interphase. At anaphase onset, its association with chromatin targets a pool of PPP1CC to dephosphorylate substrates. The sequence is that of Cell division cycle-associated protein 2 (CDCA2) from Bos taurus (Bovine).